A 548-amino-acid chain; its full sequence is Tau-cadinol synthase (548 aa).

Mg(2+)-binding residues include Asp303 and Asp307. 3 residues coordinate substrate: Asp303, Asp307, and Arg443. The short motif at 303–307 (DDTYD) is the DDXXD motif element.

The protein belongs to the terpene synthase family. As to quaternary structure, monomer. It depends on Mg(2+) as a cofactor. Mn(2+) is required as a cofactor. As to expression, constitutively expressed in aerial tissues, but barely observed in roots.

The protein localises to the cytoplasm. It carries out the reaction (2E,6E)-farnesyl diphosphate + H2O = tau-cadinol + diphosphate. It functions in the pathway secondary metabolite biosynthesis; terpenoid biosynthesis. Sesquiterpene synthase that catalyzes the formation of a blend of sesquiterpenes and sesquiterpenoid alcohols. Converts farnesyl diphosphate to tau-cadinol. The polypeptide is Tau-cadinol synthase (Zea mays (Maize)).